The primary structure comprises 1682 residues: Sodium channel protein type 7 subunit alpha (1682 aa).

At 1-117 (MLASPEPKGL…RRTTIKVLVH (117 aa)) the chain is on the cytoplasmic side. An I repeat occupies 100-401 (TLSPFNCIRR…ILAMAYEEEK (302 aa)). The helical transmembrane segment at 118–137 (PFFQLFILISVLIDCVFMSL) threads the bilayer. The Extracellular segment spans residues 138 to 141 (TNLP). Residues 142-167 (KWRPVLENTLLGIYTFEILVKLFARG) form a helical membrane-spanning segment. Over 168–178 (VWAGSFSFLGD) the chain is Cytoplasmic. Residues 179–196 (PWNWLDFSVTVFEVIIRY) form a helical membrane-spanning segment. Residues 197–200 (SPLD) lie on the Extracellular side of the membrane. The chain crosses the membrane as a helical span at residues 201–219 (FIPTLQTARTLRILKIIPL). Residues 220-237 (NQGLKSLVGVLIHCLKQL) lie on the Cytoplasmic side of the membrane. Residues 238 to 259 (IGVIILTLFFLSIFSLIGMGLF) traverse the membrane as a helical segment. The Extracellular portion of the chain corresponds to 260–338 (MGNLKHKCFR…PDQGFTNFDS (79 aa)). Cysteines 267 and 307 form a disulfide. Residues Asn-276, Asn-281, and Asn-309 are each glycosylated (N-linked (GlcNAc...) asparagine). The pore-forming intramembrane region spans 339–366 (FGWALFALFRLMAQDYPEVLYHQILYAS). A topological domain (extracellular) is located at residue Gly-367. Residues 368 to 407 (KVYMIFFVVVSFLFSFYMASLFLGILAMAYEEEKQRVGEI) form a helical membrane-spanning segment. Residues 408 to 505 (SKKIEPKFQQ…EFVHRIIMAP (98 aa)) lie on the Cytoplasmic side of the membrane. Ser-442 is subject to Phosphoserine; by PKA. An II repeat occupies 487–758 (CSPCWLKLKE…QLAVARIKKG (272 aa)). Residues 506 to 521 (FTDLFLIICIILNVCF) form a helical membrane-spanning segment. Over 522–530 (LTLEHYPMS) the chain is Extracellular. The chain crosses the membrane as a helical span at residues 531–559 (KQTNTLLNIGNLVFIGIFTAEMIFKIIAM). Residues 560 to 568 (HPYGYFQVG) lie on the Cytoplasmic side of the membrane. Residues 569 to 586 (WNIFDSMIVFHGLIELCL) form a helical membrane-spanning segment. Residues 587-592 (ANVAGM) are Extracellular-facing. Residues 593–609 (ALLRLFRMLRIFKLGKY) form a helical membrane-spanning segment. Residues 610-626 (WPTFQILMWSLSNSWVA) lie on the Cytoplasmic side of the membrane. Residues 627-655 (LKDLVLLLFTFIFFSAAFGMKLFGKNYEE) traverse the membrane as a helical segment. The Extracellular portion of the chain corresponds to 656-673 (FVCHIDKDCQLPRWHMHD). Intrachain disulfides connect Cys-658–Cys-664 and Cys-696–Cys-705. The pore-forming intramembrane region spans 674 to 700 (FFHSFLNVFRILCGEWVETLWDCMEVA). Position 701 (Gly-701) is a topological domain, extracellular. Residues 702-732 (QSWCIPFYLMVILIGNLLVLYLFLALVSSFS) form a helical membrane-spanning segment. The Cytoplasmic portion of the chain corresponds to 733–934 (SCKDVTAEEN…KTCCKIVENN (202 aa)). Thr-777 is modified (phosphothreonine; by PKA). The interval 801–871 (TQDFLKDKEK…SKEKIKQSSS (71 aa)) is disordered. Residues 804–819 (FLKDKEKSSGTEKNAT) are compositionally biased toward basic and acidic residues. Positions 820 to 834 (ENESQSLIPSPSVSE) are enriched in polar residues. The residue at position 843 (Ser-843) is a Phosphoserine. Residues Ser-869 and Ser-905 each carry the phosphoserine; by PKA modification. The III repeat unit spans residues 916-1224 (KGKIWQNIRK…RKQYRRLKKL (309 aa)). A helical transmembrane segment spans residues 935 to 953 (WFKCFIGLVTLLSTGTLAF). Residues 954–961 (EDIYMDQR) lie on the Extracellular side of the membrane. Residues 962-990 (KTIKILLEYADMIFTYIFILEMLLKWMAY) form a helical membrane-spanning segment. Residues 991–998 (GFKAYFSN) are Cytoplasmic-facing. Residues 999–1020 (GWYRLDFVVVIVFCLSLIGKTR) form a helical membrane-spanning segment. Position 1021 (Glu-1021) is a topological domain, extracellular. The chain crosses the membrane as a helical span at residues 1022–1040 (ELKPLISMKFLRPLRVLSQ). Topologically, residues 1041-1055 (FERMKVVVRALIKTT) are cytoplasmic. The chain crosses the membrane as a helical span at residues 1056–1080 (LPTLNVFLVCLMIWLIFSIMGVDLF). Residues 1081–1127 (AGRFYECIDPTSGERFPSSEVMNKSRCESLLFNESMLWENAKMNFDN) lie on the Extracellular side of the membrane. Cys-1087 and Cys-1107 are joined by a disulfide. N-linked (GlcNAc...) asparagine glycans are attached at residues Asn-1103 and Asn-1113. An intramembrane region (pore-forming) is located at residues 1128–1154 (VGNGFLSLLQVATFNGWITIMNSAIDS). Residues 1155–1167 (VAVNIQPHFEVNI) are Extracellular-facing. The chain crosses the membrane as a helical span at residues 1168–1202 (YMYCYFINFIIFGVFLPLSMLITVIIDNFNKHKIK). Residues 1203 to 1250 (LGGSNIFITVKQRKQYRRLKKLMYEDSQRPVPRPLNKLQGFIFDVVTS) are Cytoplasmic-facing. An IV repeat occupies 1233–1531 (VPRPLNKLQG…WKRFDPDRTQ (299 aa)). Residues 1251-1272 (QAFNVIVMVLICFQAIAMMIDT) traverse the membrane as a helical segment. At 1273–1276 (DVQS) the chain is on the extracellular side. Residues 1277–1305 (LQMSIALYWINSIFVMLYTMECILKLIAF) traverse the membrane as a helical segment. Topologically, residues 1306–1312 (RCFYFTI) are cytoplasmic. The chain crosses the membrane as a helical span at residues 1313–1338 (AWNIFDFMVVIFSITGLCLPMTVGSY). Residues 1339-1341 (LVP) lie on the Extracellular side of the membrane. A helical transmembrane segment spans residues 1342–1362 (PSLVQLILLSRIIHMLRLGKG). The Cytoplasmic portion of the chain corresponds to 1363–1377 (PKVFHNLMLPLMLSL). The helical transmembrane segment at 1378 to 1402 (PALLNIILLIFLVMFIYAVFGMYNF) threads the bilayer. Over 1403–1420 (AYVKKEAGINDVSNFETF) the chain is Extracellular. Residues 1421 to 1444 (GNSMLCLFQVAIFAGWDGMLDAIF) constitute an intramembrane region (pore-forming). Residues 1445–1468 (NSKWSDCDPDKINPGTQVRGDCGN) lie on the Extracellular side of the membrane. A disulfide bond links Cys-1451 and Cys-1466. The chain crosses the membrane as a helical span at residues 1469 to 1504 (PSVGIFYFVSYILISWLIIVNMYIVVVMEFLNIASK). Residues 1505–1682 (KKNKTLSEDD…KEKSPIQSQI (178 aa)) are Cytoplasmic-facing.

This sequence belongs to the sodium channel (TC 1.A.1.10) family. SCN7A subfamily. In terms of assembly, the sodium channel formed by SCN7A is probably a heterooligomeric complex consisting of the ion conducting pore forming alpha subunit SCN7A and regulatory beta subunits such as SCN3B. Interacts with ATP1A1; activates ATP1A1 and thereby indirectly signals to nearby neurons to regulate sodium homeostasis. As to expression, heart and uterus.

It localises to the cell membrane. The catalysed reaction is Na(+)(in) = Na(+)(out). In terms of biological role, sodium leak channel functioning as an osmosensor regulating sodium ion levels in various tissues and organs. While most sodium channels are voltage-gated, SCN7A is not and lets sodium flow through membrane along its concentration gradient. In glial cells of the central nervous system, senses body-fluid sodium levels and controls salt intake behavior as well as voluntary water intake through activation of nearby neurons to maintain appropriate sodium levels in the body. By mediating sodium influx into keratinocytes, also plays a role in skin barrier homeostasis. This is Sodium channel protein type 7 subunit alpha from Homo sapiens (Human).